We begin with the raw amino-acid sequence, 117 residues long: uncharacterized protein (117 aa).

A disordered region spans residues 96–117 (RKGGASKHRTLSAETGIRGEGE).

This is an uncharacterized protein from Saccharomyces cerevisiae (strain ATCC 204508 / S288c) (Baker's yeast).